The following is a 116-amino-acid chain: Dynein light chain Tctex-type 3 (116 aa).

3'-nitrotyrosine is present on Tyr4.

Belongs to the dynein light chain Tctex-type family. In terms of assembly, homodimer. The cytoplasmic dynein 1 complex consists of two catalytic heavy chains (HCs) and a number of non-catalytic subunits presented by intermediate chains (ICs), light intermediate chains (LICs) and light chains (LCs); the composition seems to vary in respect to the IC, LIC and LC composition. The heavy chain homodimer serves as a scaffold for the probable homodimeric assembly of the respective non-catalytic subunits. The ICs and LICs bind directly to the HC dimer and the LCs assemble on the IC dimer. DYNLT1 and DYNLT3 compete for association with dynein IC (DYNC1I1 or DYNC1I2). Self-associates. Interacts with DYNC1I1 and DYNC1I2. Interacts with BUB3. Interacts with SATB1 in nucleus to form complex with matrix attachment regions (MARs) of DNA.

The protein localises to the nucleus. It localises to the cytoplasm. Its subcellular location is the cytoskeleton. The protein resides in the chromosome. It is found in the centromere. The protein localises to the kinetochore. Acts as one of several non-catalytic accessory components of the cytoplasmic dynein 1 complex that are thought to be involved in linking dynein to cargos and to adapter proteins that regulate dynein function. Cytoplasmic dynein 1 acts as a motor for the intracellular retrograde motility of vesicles and organelles along microtubules. Probably binds BUB3 as part of transport cargo. Required for the efficient progression through mitosis. In Canis lupus familiaris (Dog), this protein is Dynein light chain Tctex-type 3 (DYNLT3).